The chain runs to 346 residues: Hydroxymethylglutaryl-CoA synthase (346 aa).

Position 28 (Asp-28) interacts with (3S)-3-hydroxy-3-methylglutaryl-CoA. The active-site Proton donor/acceptor is Glu-80. The (3S)-3-hydroxy-3-methylglutaryl-CoA site is built by Cys-112 and Thr-153. Cys-112 serves as the catalytic Acyl-thioester intermediate. Residue Arg-199 coordinates CoA. (3S)-3-hydroxy-3-methylglutaryl-CoA is bound by residues Thr-201 and His-234. His-234 acts as the Proton donor/acceptor in catalysis. Residue Lys-239 coordinates CoA. Residues Lys-243, Asn-266, and Ser-296 each contribute to the (3S)-3-hydroxy-3-methylglutaryl-CoA site.

The protein belongs to the thiolase-like superfamily. Archaeal HMG-CoA synthase family. Interacts with acetoacetyl-CoA thiolase that catalyzes the precedent step in the pathway and with a DUF35 protein. The acetoacetyl-CoA thiolase/HMG-CoA synthase complex channels the intermediate via a fused CoA-binding site, which allows for efficient coupling of the endergonic thiolase reaction with the exergonic HMGCS reaction.

It carries out the reaction acetoacetyl-CoA + acetyl-CoA + H2O = (3S)-3-hydroxy-3-methylglutaryl-CoA + CoA + H(+). Its pathway is metabolic intermediate biosynthesis; (R)-mevalonate biosynthesis; (R)-mevalonate from acetyl-CoA: step 2/3. Functionally, catalyzes the condensation of acetyl-CoA with acetoacetyl-CoA to form 3-hydroxy-3-methylglutaryl-CoA (HMG-CoA). Functions in the mevalonate (MVA) pathway leading to isopentenyl diphosphate (IPP), a key precursor for the biosynthesis of isoprenoid compounds that are building blocks of archaeal membrane lipids. The polypeptide is Hydroxymethylglutaryl-CoA synthase (Methanothermobacter thermautotrophicus (strain ATCC 29096 / DSM 1053 / JCM 10044 / NBRC 100330 / Delta H) (Methanobacterium thermoautotrophicum)).